The chain runs to 475 residues: MDPFILYSLAFALVYISLYFIFKGNYSNNKHTNLPLGSNGWPILGENIDMAYSSSPEKFIHERMEKHSSQVFKTSLLGQKIAIFCGTSGNKFLFSNENKLLTTWWPPSLTKPLMCPTQSQSQNSVKEIALLNRGFLREILKPENLKQYIPFMDSMARDHLKQEWIPFKEVKIYPLVKKYTFSLACKLFLSIDDFRHVKKLSDPFVLVTSGMFTVPINLPGTPYNRAIKGGKMVHEELMKIIKERKINEKNNHSNDLLSQLISFSDENGQFMNDAEIYNNIIGLLVASYDTTSAAITFVLKYLAELPNIFNEVYKEQMEIAKSKGEGELLNWDDIQKMKYSWNVACEAIRLMPPAQGAFREAITDFTFGGFTVPKGWKTFWSVYSTHKNPKYFPEPEKFDPCRFEGSGPEPYTFVPFGGGPRMCPGKEYARLEILVFMYNIVTNFKLEKLVPHEKIIYKSSPVPLNGLPVRIQPIA.

The chain crosses the membrane as a helical span at residues 6–22; it reads LYSLAFALVYISLYFIF. Cysteine 423 is a binding site for heme.

This sequence belongs to the cytochrome P450 family. Heme is required as a cofactor. As to expression, specifically expressed in roots.

The protein localises to the membrane. The catalysed reaction is beta-amyrin + reduced [NADPH--hemoprotein reductase] + O2 = daturadiol + oxidized [NADPH--hemoprotein reductase] + H2O + H(+). Its function is as follows. Catalyzes the C-6 beta-hydroxylation of beta-amyrin to form daturadiol. Catalyzes the C-6 beta-hydroxylation of alpha-amyrin to form 6-beta-hydroxy-alpha-amyrin. This chain is Beta-amyrin 6-beta-monooxygenase, found in Solanum lycopersicum (Tomato).